We begin with the raw amino-acid sequence, 393 residues long: MLITKADPMVVSMGPHHPSMHGVLRLIVTLDGENVADCEPVLGYLHRGMEKIAESRTTLQYLPYVTRWDYLATMFTEAITVNAPERLANIQVPKRASYIRMIMLELSRIASHLLWLGPFMADIGAQTPFFYILREREMIYDLFEAATGMRMMHNYFRIGGVAVDLPYGWVDKCLDFCDYFLPKVNEYERLITRNPIFLKRVEGIGVIGREEAINWGLSGPMLRASGVQWDLRKVDRYECYHELDWQVEWQSGGDCFARYLVRIGEMRESVTIIQQALKAIPGGPYENLEARRMASMAQKNSQWNDFEYQFVSKKPSPTFKLPKQEHYVRVEAPKGELGVFLIGDDSMFPWRWKIRPPGFINLQILPQLLIGMKLADIMTILGSIDIIMGEVDR.

The protein belongs to the complex I 49 kDa subunit family. As to quaternary structure, NDH is composed of at least 16 different subunits, 5 of which are encoded in the nucleus.

It localises to the plastid. The protein resides in the chloroplast thylakoid membrane. It catalyses the reaction a plastoquinone + NADH + (n+1) H(+)(in) = a plastoquinol + NAD(+) + n H(+)(out). The enzyme catalyses a plastoquinone + NADPH + (n+1) H(+)(in) = a plastoquinol + NADP(+) + n H(+)(out). In terms of biological role, NDH shuttles electrons from NAD(P)H:plastoquinone, via FMN and iron-sulfur (Fe-S) centers, to quinones in the photosynthetic chain and possibly in a chloroplast respiratory chain. The immediate electron acceptor for the enzyme in this species is believed to be plastoquinone. Couples the redox reaction to proton translocation, and thus conserves the redox energy in a proton gradient. The polypeptide is NAD(P)H-quinone oxidoreductase subunit H, chloroplastic (Zygnema circumcarinatum (Green alga)).